A 548-amino-acid polypeptide reads, in one-letter code: Tyrosine-protein phosphatase non-receptor type 61F (548 aa).

Residues M1–S525 lie on the Cytoplasmic side of the membrane. In terms of domain architecture, Tyrosine-protein phosphatase spans F33–G296. A disordered region spans residues K46–R65. Residue S83 is modified to Phosphoserine. Y86 carries the phosphotyrosine modification. Residues D203, C237 to R243, and Q281 each bind substrate. C237 functions as the Phosphocysteine intermediate in the catalytic mechanism. 3 consecutive short sequence motifs (PXXP motif (SH3-binding)) follow at residues P327–P330, P339–P342, and P394–P397. Positions E386–Q517 are disordered. The span at S404–T428 shows a compositional bias: acidic residues. 2 consecutive short sequence motifs (PXXP motif (SH3-binding)) follow at residues P459–P462 and P480–P483. Basic and acidic residues predominate over residues K502–Q517. The chain crosses the membrane as a helical span at residues L526–T545. Over K546 to G548 the chain is Extracellular.

It belongs to the protein-tyrosine phosphatase family. Non-receptor class 1 subfamily. In terms of assembly, interacts (via C-terminus) with dock/dreadlocks; this interaction is independent of insulin stimulation and is required for dephosphorylation of the insulin-like receptor InR.

It localises to the cytoplasm. It is found in the membrane. Its subcellular location is the endomembrane system. The protein localises to the nucleus. It carries out the reaction O-phospho-L-tyrosyl-[protein] + H2O = L-tyrosyl-[protein] + phosphate. Its function is as follows. Non-receptor protein tyrosine phosphatase. Required for maintaining dock/dreadlocks in its non-phosphorylated state. Negative regulator of InR/insulin-like receptor signaling through dephosphorylation of tyrosines when recruited by dock/dreadlocks. This Drosophila melanogaster (Fruit fly) protein is Tyrosine-protein phosphatase non-receptor type 61F.